The chain runs to 228 residues: 3-dehydroquinate dehydratase (228 aa).

Residues serine 26, 51-53 (EIR), and arginine 84 contribute to the 3-dehydroquinate site. The Proton donor/acceptor role is filled by histidine 127. Catalysis depends on lysine 150, which acts as the Schiff-base intermediate with substrate. Residues arginine 190, threonine 209, and glutamine 213 each coordinate 3-dehydroquinate.

The protein belongs to the type-I 3-dehydroquinase family. As to quaternary structure, homodimer.

It carries out the reaction 3-dehydroquinate = 3-dehydroshikimate + H2O. Its pathway is metabolic intermediate biosynthesis; chorismate biosynthesis; chorismate from D-erythrose 4-phosphate and phosphoenolpyruvate: step 3/7. In terms of biological role, involved in the third step of the chorismate pathway, which leads to the biosynthesis of aromatic amino acids. Catalyzes the cis-dehydration of 3-dehydroquinate (DHQ) and introduces the first double bond of the aromatic ring to yield 3-dehydroshikimate. The sequence is that of 3-dehydroquinate dehydratase from Thermoplasma acidophilum (strain ATCC 25905 / DSM 1728 / JCM 9062 / NBRC 15155 / AMRC-C165).